The following is a 565-amino-acid chain: Perivitellin-2 67 kDa subunit (565 aa).

The N-terminal stretch at 1–26 is a signal peptide; it reads MSQLRWWVVSQVLLLIAICSLDHSEG. The 314-residue stretch at 27–340 folds into the MACPF domain; sequence ARVCPKIVPG…AKVANLDRLT (314 aa). The interval 387-565 is invertebrate MACPF Accessory Domain (IMAD); sequence VPAWFSDRTT…CGMSWALIAK (179 aa).

In terms of assembly, perivitellin-2 is a dimer of heterodimers held together head-to-tail by non-covalent forces. The heterodimer is composed of the tachylectin subunit (31 kDa) and the MACPF subunit (67 kDa) that are disulfide-linked. PV2 is a very high density lipoprotein (VHDL). It contains 3.75% of lipids. The major lipid classes are free sterols and phospholipids and also have significant quantities of energy-providing triacylglycerides and free fatty acids. As to expression, produced by albumen secretory cells. Found in developing eggs.

It is found in the secreted. The protein localises to the target cell membrane. Its function is as follows. The egg defensive protein perivitellin-2 is a pore-forming two-subunit glycoprotein that affects both the nervous and digestive systems of mammals. In addition, it is a source of both structural and energetic molecules during embryonic development. The tachylectin subunit (31 kDa) binds target membranes while the MACPF subunit (67 kDa) disrupts lipid bilayers forming large pores (inner diameter of about 5.6 nm) altering the plasma membrance conductance. Both in vivo and in vitro, the protein shows wide pH range stability and is resistant to enzymatic proteolysis from gastrointestinal environments. It is cytotoxic to both epithelial and immune cells from the digestive system of mammals. It induces enterocyte death by a lytic mechanism and disrupts enterocyte monolayers in a dose-dependent manner. After oral administration to mice, it binds enterocytes and induces large dose-dependent morphological changes on their small intestine mucosa, reducing the absorptive surface. Additionally, it is detected in the Peyer's patches where it activates lymphoid follicles and triggers apoptosis. The toxin can also traverse the intestinal barrier and induce oral adaptive immunity with evidence of circulating antibody response. The toxin also shows hemagglutination properties thanks to the tachylectin subunit, but has no hemolytic activity. In addition to enterotoxin activity, the toxin also acts as a neurotoxin, since an intraperitoneal injection can induce paralysis of the mice rear limbs, followed by death. The sequence is that of Perivitellin-2 67 kDa subunit from Pomacea maculata (Giant applesnail).